The sequence spans 89 residues: Large ribosomal subunit protein bL27 (89 aa).

A disordered region spans residues 1-21 (MAHKKAGGSSRNGRDSKGKRL).

It belongs to the bacterial ribosomal protein bL27 family.

The sequence is that of Large ribosomal subunit protein bL27 from Bradyrhizobium sp. (strain BTAi1 / ATCC BAA-1182).